A 313-amino-acid chain; its full sequence is Expansin-like A4 (313 aa).

Residues 1 to 30 form the signal peptide; it reads MDDNGDVHFCHRATAVVALLLLHLVVVANA. The Expansin-like EG45 domain occupies 59 to 173; that stretch reads GGACGFGAAP…RRIPCEYRES (115 aa). Asn-124 is a glycosylation site (N-linked (GlcNAc...) asparagine). One can recognise an Expansin-like CBD domain in the interval 188 to 281; it reads THLAIRFLYQ…DWRPGEVYDT (94 aa).

The protein belongs to the expansin family. Expansin-like A subfamily.

The protein resides in the secreted. In Oryza sativa subsp. japonica (Rice), this protein is Expansin-like A4 (EXLA4).